The following is a 145-amino-acid chain: Protein BUD31 homolog 1 (145 aa).

It belongs to the BUD31 (G10) family.

It is found in the nucleus. The polypeptide is Protein BUD31 homolog 1 (Oryza sativa subsp. japonica (Rice)).